The following is a 433-amino-acid chain: Trigger factor (433 aa).

Residues 161-246 (NDRVIIDFVG…LNKVENMILP (86 aa)) enclose the PPIase FKBP-type domain.

The protein belongs to the FKBP-type PPIase family. Tig subfamily.

It is found in the cytoplasm. It carries out the reaction [protein]-peptidylproline (omega=180) = [protein]-peptidylproline (omega=0). Involved in protein export. Acts as a chaperone by maintaining the newly synthesized protein in an open conformation. Functions as a peptidyl-prolyl cis-trans isomerase. This is Trigger factor from Haemophilus ducreyi (strain 35000HP / ATCC 700724).